Here is a 152-residue protein sequence, read N- to C-terminus: D-aminoacyl-tRNA deacylase (152 aa).

The short motif at 142–143 (GP) is the Gly-cisPro motif, important for rejection of L-amino acids element.

This sequence belongs to the DTD family. In terms of assembly, homodimer.

The protein resides in the cytoplasm. It catalyses the reaction glycyl-tRNA(Ala) + H2O = tRNA(Ala) + glycine + H(+). The enzyme catalyses a D-aminoacyl-tRNA + H2O = a tRNA + a D-alpha-amino acid + H(+). Functionally, an aminoacyl-tRNA editing enzyme that deacylates mischarged D-aminoacyl-tRNAs. Also deacylates mischarged glycyl-tRNA(Ala), protecting cells against glycine mischarging by AlaRS. Acts via tRNA-based rather than protein-based catalysis; rejects L-amino acids rather than detecting D-amino acids in the active site. By recycling D-aminoacyl-tRNA to D-amino acids and free tRNA molecules, this enzyme counteracts the toxicity associated with the formation of D-aminoacyl-tRNA entities in vivo and helps enforce protein L-homochirality. This chain is D-aminoacyl-tRNA deacylase, found in Burkholderia vietnamiensis (strain G4 / LMG 22486) (Burkholderia cepacia (strain R1808)).